Consider the following 152-residue polypeptide: TOMM20-like protein 1 (152 aa).

Over 1 to 9 the chain is Mitochondrial intermembrane; that stretch reads MPSVRSLLR. The chain crosses the membrane as a helical span at residues 10-29; it reads LLAAAAACGAFAFLGYCIYL. The Cytoplasmic portion of the chain corresponds to 30-152; it reads NRKRRGDPAF…EQDCLEDDPD (123 aa). A disordered region spans residues 43–62; it reads LRDKRRAEPQKAEEQGTQLW. A compositionally biased stretch (basic and acidic residues) spans 47–56; sequence RRAEPQKAEE.

The protein belongs to the Tom20 family.

It localises to the mitochondrion outer membrane. This Homo sapiens (Human) protein is TOMM20-like protein 1 (TOMM20L).